Reading from the N-terminus, the 754-residue chain is 5-methyltetrahydropteroyltriglutamate--homocysteine methyltransferase (754 aa).

5-methyltetrahydropteroyltri-L-glutamate-binding positions include 19-22 and Lys121; that span reads RELK. L-homocysteine-binding positions include 423–425 and Glu476; that span reads IGS. L-methionine is bound by residues 423–425 and Glu476; that span reads IGS. Residues 507 to 508 and Trp553 contribute to the 5-methyltetrahydropteroyltri-L-glutamate site; that span reads RC. An L-homocysteine-binding site is contributed by Asp591. Asp591 contacts L-methionine. Residue Glu597 participates in 5-methyltetrahydropteroyltri-L-glutamate binding. 3 residues coordinate Zn(2+): His633, Cys635, and Glu657. The active-site Proton donor is His686. Zn(2+) is bound at residue Cys718.

Belongs to the vitamin-B12 independent methionine synthase family. The cofactor is Zn(2+).

It catalyses the reaction 5-methyltetrahydropteroyltri-L-glutamate + L-homocysteine = tetrahydropteroyltri-L-glutamate + L-methionine. Its pathway is amino-acid biosynthesis; L-methionine biosynthesis via de novo pathway; L-methionine from L-homocysteine (MetE route): step 1/1. Catalyzes the transfer of a methyl group from 5-methyltetrahydrofolate to homocysteine resulting in methionine formation. The protein is 5-methyltetrahydropteroyltriglutamate--homocysteine methyltransferase of Corynebacterium efficiens (strain DSM 44549 / YS-314 / AJ 12310 / JCM 11189 / NBRC 100395).